Reading from the N-terminus, the 355-residue chain is Elongation factor Ts (355 aa).

Positions 82–85 (TDFV) are involved in Mg(2+) ion dislocation from EF-Tu.

It belongs to the EF-Ts family.

The protein resides in the cytoplasm. In terms of biological role, associates with the EF-Tu.GDP complex and induces the exchange of GDP to GTP. It remains bound to the aminoacyl-tRNA.EF-Tu.GTP complex up to the GTP hydrolysis stage on the ribosome. In Helicobacter acinonychis (strain Sheeba), this protein is Elongation factor Ts.